We begin with the raw amino-acid sequence, 146 residues long: Globin-1 (146 aa).

A Globin domain is found at 9-146 (QLTADVKKDL…KLVAVVQAAL (138 aa)). His101 is a binding site for heme b.

This sequence belongs to the globin family. In terms of assembly, homodimer.

It is found in the cytoplasm. This is Globin-1 from Anadara inaequivalvis (Inequivalve ark).